A 194-amino-acid chain; its full sequence is 21 kDa hemolysin (194 aa).

The first 19 residues, 1 to 19, serve as a signal peptide directing secretion; that stretch reads MRTRSRSTVRPLWPPPSPA. BON domains lie at 49–118 and 127–194; these read DDEV…RTGE and IDSW…NYVQ.

It is found in the periplasm. The chain is 21 kDa hemolysin (hly) from Actinobacillus pleuropneumoniae (Haemophilus pleuropneumoniae).